A 184-amino-acid polypeptide reads, in one-letter code: Glutathione-regulated potassium-efflux system ancillary protein KefG (184 aa).

The protein belongs to the NAD(P)H dehydrogenase (quinone) family. KefG subfamily. In terms of assembly, interacts with KefB.

It is found in the cell inner membrane. The enzyme catalyses a quinone + NADH + H(+) = a quinol + NAD(+). The catalysed reaction is a quinone + NADPH + H(+) = a quinol + NADP(+). Regulatory subunit of a potassium efflux system that confers protection against electrophiles. Required for full activity of KefB. The sequence is that of Glutathione-regulated potassium-efflux system ancillary protein KefG from Erwinia tasmaniensis (strain DSM 17950 / CFBP 7177 / CIP 109463 / NCPPB 4357 / Et1/99).